The chain runs to 403 residues: MSKFNRIHLVVLDSVGIGAAPDADKFFNAGVADTDSDTLGHISETAGLAVPNMAKIGLGHIPRPVPLKTVPAEADPTGYVTKLEEVSLGKDTMTGHWEIMGLNITEPFDTFWDGFPEEIIQKIEAFSGRKVIREANKPYSGTKVIDDFGPRQMETGELIVYTSADPVLQIAAHEEVIPVEELYRICEYARSITLERPALLGRIIARPYIGEPGSFTRTANRRDYAVSPFQDTVLNKLADAGISTYAVGKINDIFNGSGITNDMGHNKSNSHGIDTLIKTLQLPAFTKGLSFTNLVDFDASFGHRRDPEGYRDCLHEFDRRLPEIIANMKDDDLLLITADHGNDPTYAGTDHTREYIPLLAYSASCTGAGVIPQGHFADISATIAENFGVDTAMIGTSFLADLV.

Positions 13, 298, 303, 339, 340, and 351 each coordinate Mn(2+).

Belongs to the phosphopentomutase family. It depends on Mn(2+) as a cofactor.

Its subcellular location is the cytoplasm. It catalyses the reaction 2-deoxy-alpha-D-ribose 1-phosphate = 2-deoxy-D-ribose 5-phosphate. The catalysed reaction is alpha-D-ribose 1-phosphate = D-ribose 5-phosphate. The protein operates within carbohydrate degradation; 2-deoxy-D-ribose 1-phosphate degradation; D-glyceraldehyde 3-phosphate and acetaldehyde from 2-deoxy-alpha-D-ribose 1-phosphate: step 1/2. Its function is as follows. Isomerase that catalyzes the conversion of deoxy-ribose 1-phosphate (dRib-1-P) and ribose 1-phosphate (Rib-1-P) to deoxy-ribose 5-phosphate (dRib-5-P) and ribose 5-phosphate (Rib-5-P), respectively. The polypeptide is Phosphopentomutase (Streptococcus equi subsp. zooepidemicus (strain H70)).